The primary structure comprises 441 residues: ATP-dependent protease ATPase subunit HslU (441 aa).

ATP-binding positions include I18, 60-65, D254, E319, and R391; that span reads GVGKTE.

The protein belongs to the ClpX chaperone family. HslU subfamily. A double ring-shaped homohexamer of HslV is capped on each side by a ring-shaped HslU homohexamer. The assembly of the HslU/HslV complex is dependent on binding of ATP.

It localises to the cytoplasm. In terms of biological role, ATPase subunit of a proteasome-like degradation complex; this subunit has chaperone activity. The binding of ATP and its subsequent hydrolysis by HslU are essential for unfolding of protein substrates subsequently hydrolyzed by HslV. HslU recognizes the N-terminal part of its protein substrates and unfolds these before they are guided to HslV for hydrolysis. In Shewanella pealeana (strain ATCC 700345 / ANG-SQ1), this protein is ATP-dependent protease ATPase subunit HslU.